The sequence spans 199 residues: MIALLTGKLAHKSPDFIILDVNGVGYRVQIPFSTYYALPEGGSSVSLNIFTHVKEDAINLYGFRTMEEKEMFQLLISVSGIGPKLGNGILSNIEAQNLSDALIRGDLARLATIPGIGKKTAERLVLELREKVKKLGHGPLQQDVAPADAHNDMRDDVVSALVNLGYKEAVVQKTVDEIGVAADATVESLLKQALKKLMK.

Positions 1-64 are domain I; it reads MIALLTGKLA…EDAINLYGFR (64 aa). Residues 65 to 143 form a domain II region; that stretch reads TMEEKEMFQL…KLGHGPLQQD (79 aa). The tract at residues 144–148 is flexible linker; sequence VAPAD. The tract at residues 149-199 is domain III; it reads AHNDMRDDVVSALVNLGYKEAVVQKTVDEIGVAADATVESLLKQALKKLMK.

Belongs to the RuvA family. In terms of assembly, homotetramer. Forms an RuvA(8)-RuvB(12)-Holliday junction (HJ) complex. HJ DNA is sandwiched between 2 RuvA tetramers; dsDNA enters through RuvA and exits via RuvB. An RuvB hexamer assembles on each DNA strand where it exits the tetramer. Each RuvB hexamer is contacted by two RuvA subunits (via domain III) on 2 adjacent RuvB subunits; this complex drives branch migration. In the full resolvosome a probable DNA-RuvA(4)-RuvB(12)-RuvC(2) complex forms which resolves the HJ.

The protein localises to the cytoplasm. Its function is as follows. The RuvA-RuvB-RuvC complex processes Holliday junction (HJ) DNA during genetic recombination and DNA repair, while the RuvA-RuvB complex plays an important role in the rescue of blocked DNA replication forks via replication fork reversal (RFR). RuvA specifically binds to HJ cruciform DNA, conferring on it an open structure. The RuvB hexamer acts as an ATP-dependent pump, pulling dsDNA into and through the RuvAB complex. HJ branch migration allows RuvC to scan DNA until it finds its consensus sequence, where it cleaves and resolves the cruciform DNA. This Geotalea daltonii (strain DSM 22248 / JCM 15807 / FRC-32) (Geobacter daltonii) protein is Holliday junction branch migration complex subunit RuvA.